The chain runs to 327 residues: DNA-directed RNA polymerase subunit alpha (327 aa).

Residues 1–233 (MQNSASEFLK…DQLSIFADLQ (233 aa)) form an alpha N-terminal domain (alpha-NTD) region. The alpha C-terminal domain (alpha-CTD) stretch occupies residues 247-327 (VDPILLRPVD…NWPPAGLEKP (81 aa)).

The protein belongs to the RNA polymerase alpha chain family. In terms of assembly, homodimer. The RNAP catalytic core consists of 2 alpha, 1 beta, 1 beta' and 1 omega subunit. When a sigma factor is associated with the core the holoenzyme is formed, which can initiate transcription.

It carries out the reaction RNA(n) + a ribonucleoside 5'-triphosphate = RNA(n+1) + diphosphate. In terms of biological role, DNA-dependent RNA polymerase catalyzes the transcription of DNA into RNA using the four ribonucleoside triphosphates as substrates. This Laribacter hongkongensis (strain HLHK9) protein is DNA-directed RNA polymerase subunit alpha.